Reading from the N-terminus, the 358-residue chain is Nicotinate-nucleotide--dimethylbenzimidazole phosphoribosyltransferase (358 aa).

Residue glutamate 323 is the Proton acceptor of the active site.

The protein belongs to the CobT family.

It carries out the reaction 5,6-dimethylbenzimidazole + nicotinate beta-D-ribonucleotide = alpha-ribazole 5'-phosphate + nicotinate + H(+). Its pathway is nucleoside biosynthesis; alpha-ribazole biosynthesis; alpha-ribazole from 5,6-dimethylbenzimidazole: step 1/2. Catalyzes the synthesis of alpha-ribazole-5'-phosphate from nicotinate mononucleotide (NAMN) and 5,6-dimethylbenzimidazole (DMB). This chain is Nicotinate-nucleotide--dimethylbenzimidazole phosphoribosyltransferase, found in Oleidesulfovibrio alaskensis (strain ATCC BAA-1058 / DSM 17464 / G20) (Desulfovibrio alaskensis).